A 433-amino-acid polypeptide reads, in one-letter code: DNA methyltransferase 1-associated protein 1 (433 aa).

The required for nuclear localization stretch occupies residues 1–204; sequence MSADVRDILD…EVVALLAKAK (204 aa). Residues 148-197 form the Myb-like domain; sequence NNWSKVQTDHLFDLARRFDLRFIVMADRWNRQQHGTKTVEELKERYYEVV. Residues 186–281 adopt a coiled-coil conformation; the sequence is VEELKERYYE…ADQQNEHASN (96 aa). A compositionally biased stretch (basic and acidic residues) spans 252–264; sequence EARKKERERKTQD. Positions 252-305 are disordered; it reads EARKKERERKTQDLQKLISQADQQNEHASNTPSTRKYEKKLHKKKVHQQPRPSR. Residues 268–285 show a composition bias toward polar residues; the sequence is LISQADQQNEHASNTPST. The span at 288–299 shows a compositional bias: basic residues; the sequence is YEKKLHKKKVHQ.

As to quaternary structure, interacts with Rel. Interacts with akirin and Bap55.

The protein resides in the nucleus. The protein localises to the cytoplasm. Involved in transcription repression and activation. Required for larvae and pupal development, and for normal innate immune responses. Involved in modulating the activation of the immune deficiency pathway (Imd), acting either downstream of, or at the level of, the NF-kappa-B factor Rel. Possibly functions with akirin to regulate Rel, and its interaction with the Brahma complex protein Bap55 suggests that it may regulate the IMD pathway at the level of chromatin remodeling. The chain is DNA methyltransferase 1-associated protein 1 from Drosophila melanogaster (Fruit fly).